The primary structure comprises 207 residues: Ribonuclease HII (207 aa).

The RNase H type-2 domain occupies 20-207; sequence QLFAGVDEVG…KPVKRVLGIE (188 aa). A divalent metal cation is bound by residues D26, E27, and D118.

This sequence belongs to the RNase HII family. Mn(2+) serves as cofactor. Mg(2+) is required as a cofactor.

The protein resides in the cytoplasm. It catalyses the reaction Endonucleolytic cleavage to 5'-phosphomonoester.. Functionally, endonuclease that specifically degrades the RNA of RNA-DNA hybrids. This chain is Ribonuclease HII, found in Aliivibrio salmonicida (strain LFI1238) (Vibrio salmonicida (strain LFI1238)).